Consider the following 295-residue polypeptide: Sulfotransferase 1 family member D1 (295 aa).

48 to 53 (KSGTTW) is a 3'-phosphoadenylyl sulfate binding site. Residues phenylalanine 81 and 106–108 (KTH) each bind substrate. The active-site Proton acceptor is histidine 108. Arginine 130 and serine 138 together coordinate 3'-phosphoadenylyl sulfate. Residue phenylalanine 142 participates in substrate binding. 3'-phosphoadenylyl sulfate contacts are provided by residues tyrosine 193, serine 227, and 257 to 259 (RKG).

Belongs to the sulfotransferase 1 family.

The protein resides in the cytoplasm. Functionally, sulfotransferase with broad substrate specificity that utilizes 3'-phospho-5'-adenylyl sulfate (PAPS) as sulfonate donor to catalyze the sulfate conjugation of catecholamines, such as dopamine, prostaglandins, leukotriene E4, drugs and xenobiotic compounds. Has sulfotransferase activity towards p-nitrophenol, 2-naphthylamine and minoxidil (in vitro). Sulfonation increases the water solubility of most compounds, and therefore their renal excretion, but it can also result in bioactivation to form active metabolites. This chain is Sulfotransferase 1 family member D1 (Sult1d1), found in Rattus norvegicus (Rat).